A 482-amino-acid chain; its full sequence is Caspase-8 (482 aa).

Residues 1–218 (MDFHSCLYDI…DMWDSPGEQE (218 aa)) constitute a propeptide that is removed on maturation. DED domains are found at residues 2-80 (DFHS…RVLK) and 100-177 (AYRV…RIDD). Serine 188 and serine 213 each carry phosphoserine. Histidine 319 is an active-site residue. Tyrosine 336 is modified (phosphotyrosine). Cysteine 362 is a catalytic residue. The propeptide occupies 379–388 (LEQEHVLEED). Serine 390 carries the phosphoserine; by CDK1 modification.

It belongs to the peptidase C14A family. As to quaternary structure, heterotetramer that consists of two anti-parallel arranged heterodimers, each one formed by a 18 kDa (p18) and a 10 kDa (p10) subunit. Component of the death-induced signaling complex (DISC) composed of cell surface receptor FAS/CD95 or TNFRSF1A, adapter protein FADD and the CASP8 protease; recruitment of CASP8 to the complex is required for processing of CASP8 into the p18 and p10 subunits. Component of the AIM2 PANoptosome complex, a multiprotein complex that drives inflammatory cell death (PANoptosis). Interacts with CFLAR and PEA15. Interacts with RFFL and RNF34; negatively regulate CASP8 through proteasomal degradation. Interacts with TNFAIP8L2. Interacts with CASP8AP2. Interacts with NOL3; decreases CASP8 activity in a mitochondria localization- and phosphorylation-dependent manner and this interaction is dissociated by calcium. Interacts with UBR2. Interacts with RIPK1. Interacts with stimulated TNFRSF10B; this interaction is followed by CASP8 proteolytic cleavage and activation. Post-translationally, generation of the subunits requires association with the death-inducing signaling complex (DISC), whereas additional processing is likely due to the autocatalytic activity of the activated protease. GZMB and CASP10 can be involved in these processing events. Phosphorylation on Ser-389 during mitosis by CDK1 inhibits activation by proteolysis and prevents apoptosis. This phosphorylation occurs in cancer cell lines, as well as in primary breast tissues and lymphocytes.

The protein resides in the cytoplasm. Its subcellular location is the nucleus. The catalysed reaction is Strict requirement for Asp at position P1 and has a preferred cleavage sequence of (Leu/Asp/Val)-Glu-Thr-Asp-|-(Gly/Ser/Ala).. With respect to regulation, CASP8 activity is restricted by RIPK1. In terms of biological role, thiol protease that plays a key role in programmed cell death by acting as a molecular switch for apoptosis, necroptosis and pyroptosis, and is required to prevent tissue damage during embryonic development and adulthood. Initiator protease that induces extrinsic apoptosis by mediating cleavage and activation of effector caspases responsible for FAS/CD95-mediated and TNFRSF1A-induced cell death. Cleaves and activates effector caspases CASP3, CASP4, CASP6, CASP7, CASP9 and CASP10. Binding to the adapter molecule FADD recruits it to either receptor FAS/CD95 or TNFRSF1A. The resulting aggregate called the death-inducing signaling complex (DISC) performs CASP8 proteolytic activation. The active dimeric enzyme is then liberated from the DISC and free to activate downstream apoptotic proteases. Proteolytic fragments of the N-terminal propeptide (termed CAP3, CAP5 and CAP6) are likely retained in the DISC. In addition to extrinsic apoptosis, also acts as a negative regulator of necroptosis: acts by cleaving RIPK1 at 'Asp-325', which is crucial to inhibit RIPK1 kinase activity, limiting TNF-induced apoptosis, necroptosis and inflammatory response. Also able to initiate pyroptosis by mediating cleavage and activation of gasdermin-C and -D (GSDMC and GSDMD, respectively): gasdermin cleavage promotes release of the N-terminal moiety that binds to membranes and forms pores, triggering pyroptosis. Initiates pyroptosis following inactivation of MAP3K7/TAK1. Also acts as a regulator of innate immunity by mediating cleavage and inactivation of N4BP1 downstream of TLR3 or TLR4, thereby promoting cytokine production. May participate in the Granzyme B (GZMB) cell death pathways. Cleaves PARP1 and PARP2. The sequence is that of Caspase-8 from Rattus norvegicus (Rat).